Here is a 329-residue protein sequence, read N- to C-terminus: Cardiolipin synthase (CMP-forming) (329 aa).

A mitochondrion-targeting transit peptide spans 1-34 (MPPSVATHASLLLKAAAAAAHLHPKPFFSPRAAP). A disordered region spans residues 27–55 (FFSPRAAPPRIPSAPAPPAAGGSRYRPTT). Residues 32-44 (AAPPRIPSAPAPP) are compositionally biased toward pro residues. The next 5 helical transmembrane spans lie at 134–154 (LLTLPTVLTIGRVAAVPLLIS), 156–176 (FYMEGPWAATATTGIFLAAAV), 194–214 (FGAFLDPVADKLMVAATLVLL), 228–248 (PWLLTVPAIAIIGREITMSAV), and 298–318 (VTSGIALLYVSAGLAIWSLVV). Residues 319 to 329 (YMRKIWRILLK) are Mitochondrial intermembrane-facing.

This sequence belongs to the CDP-alcohol phosphatidyltransferase class-I family. Requires Mn(2+) as cofactor.

The protein localises to the mitochondrion inner membrane. The enzyme catalyses a CDP-1,2-diacyl-sn-glycerol + a 1,2-diacyl-sn-glycero-3-phospho-(1'-sn-glycerol) = a cardiolipin + CMP + H(+). Its function is as follows. Catalyzes the synthesis of cardiolipin (CL) (diphosphatidylglycerol) by specifically transferring a phosphatidyl group from CDP-diacylglycerol to phosphatidylglycerol (PG). CL is a key phospholipid in mitochondrial membranes and plays important roles in maintaining the functional integrity and dynamics of mitochondria under both optimal and stress conditions. The protein is Cardiolipin synthase (CMP-forming) of Oryza sativa subsp. japonica (Rice).